Reading from the N-terminus, the 269-residue chain is Regulating synaptic membrane exocytosis protein 4 (269 aa).

Residues 115-233 (PMGDVEIGLQ…DLTTLAVGWY (119 aa)) form the C2 domain. Serine 254 and serine 257 each carry phosphoserine.

Binds PPFIA3. Does not bind RAB3.

It is found in the synapse. Its function is as follows. Regulates synaptic membrane exocytosis. The chain is Regulating synaptic membrane exocytosis protein 4 (RIMS4) from Homo sapiens (Human).